We begin with the raw amino-acid sequence, 930 residues long: Serine/threonine-protein kinase PknD (930 aa).

The Protein kinase domain maps to 4 to 291 (YDIIRMIGKG…ALKADIEQHL (288 aa)). Residues 10 to 18 (IGKGGMGEV) and K33 each bind ATP. The Proton acceptor role is filled by D138.

This sequence belongs to the protein kinase superfamily. Ser/Thr protein kinase family. Autophosphorylated on serine and threonine residues.

It carries out the reaction L-seryl-[protein] + ATP = O-phospho-L-seryl-[protein] + ADP + H(+). The enzyme catalyses L-threonyl-[protein] + ATP = O-phospho-L-threonyl-[protein] + ADP + H(+). Together with the serine/threonine kinase Pkn1, may play a role in the specific interactions with host proteins during intracellular growth. The polypeptide is Serine/threonine-protein kinase PknD (Chlamydia caviae (strain ATCC VR-813 / DSM 19441 / 03DC25 / GPIC) (Chlamydophila caviae)).